A 249-amino-acid polypeptide reads, in one-letter code: Transcription factor MYB90 (249 aa).

HTH myb-type domains lie at Ser-5–Leu-57 and Lys-58–His-112. DNA-binding regions (H-T-H motif) lie at residues Trp-33–Leu-57 and Trp-85–Leu-108.

As to quaternary structure, interacts with BHLH12/MYC1, BHLH1/GL3/MYC6, BHLH2/EGL3/MYC146, and BHLH42/TT8. In terms of tissue distribution, expressed only in leaves and siliques.

It is found in the nucleus. Transcription activator, when associated with BHLH12/MYC1, EGL3, or GL3. Promotes the synthesis of phenylpropanoid-derived compounds such as anthocyanins. The sequence is that of Transcription factor MYB90 (MYB90) from Arabidopsis thaliana (Mouse-ear cress).